We begin with the raw amino-acid sequence, 193 residues long: Superoxide dismutase [Fe] (193 aa).

Residue histidine 27 participates in Fe cation binding. Position 51 is an N6-acetyllysine (lysine 51). Positions 74, 157, and 161 each coordinate Fe cation.

It belongs to the iron/manganese superoxide dismutase family. As to quaternary structure, homodimer. Fe cation serves as cofactor.

It catalyses the reaction 2 superoxide + 2 H(+) = H2O2 + O2. In terms of biological role, destroys superoxide anion radicals which are normally produced within the cells and which are toxic to biological systems. In Escherichia coli O157:H7, this protein is Superoxide dismutase [Fe] (sodB).